A 961-amino-acid chain; its full sequence is Rho guanine nucleotide exchange factor 2 (961 aa).

A Phorbol-ester/DAG-type zinc finger spans residues 12 to 59 (GHLFTTISVSGMTMCYACNKSITAKEALICPTCNVTIHNRCKDTLANC). A phosphoserine mark is found at Ser-82, Ser-95, Ser-102, Ser-106, Ser-110, Ser-124, Ser-136, Ser-145, Ser-147, and Ser-150. Residues 104–134 (RQSLLGSRRGRSPLSLAKSVSTTNIAGHFND) form an interaction with DYNLT1 region. In terms of domain architecture, DH spans 209–406 (KQQDVIYELI…KELLSNVDQD (198 aa)). Lys-327 bears the N6-acetyllysine mark. Positions 446–545 (KLIHDGCLLW…WIRVIQQSVR (100 aa)) constitute a PH domain. The stretch at 561-588 (EAYLRRIKMELQQKDRALVELLQEKVGL) forms a coiled coil. Ser-619 and Ser-622 each carry phosphoserine. A Phosphothreonine; by MAPK1 or MAPK3 modification is found at Thr-653. Residues 659-679 (LPVETDSGGNTSPGVTANGEA) form a disordered region. Ser-665, Ser-670, Ser-685, and Ser-756 each carry phosphoserine. Residues 742–761 (PEGPERREKLTRANSRDGEA) show a composition bias toward basic and acidic residues. The disordered stretch occupies residues 742-770 (PEGPERREKLTRANSRDGEAGRAGAAPVA). Residues 772–841 (EKQATELALL…RQLAALGHTE (70 aa)) are a coiled coil. Position 860 is a phosphoserine; by PAK1 and AURKA (Ser-860). The interval 867 to 961 (LYLSFTPPQP…RDGEPVASES (95 aa)) is disordered. Tyr-868 bears the Phosphotyrosine mark. Phosphoserine; by PAK4 is present on Ser-870. Over residues 894–913 (RPFEDRERQELGSPDERLQD) the composition is skewed to basic and acidic residues. Residues Ser-906, Ser-914, and Ser-915 each carry the phosphoserine modification. Residues 915–925 (SDPDTGSEEEG) show a composition bias toward acidic residues. Thr-919 bears the Phosphothreonine mark. 4 positions are modified to phosphoserine: Ser-921, Ser-927, Ser-928, and Ser-931. The residue at position 935 (Ser-935) is a Phosphoserine; by CDK1.

In terms of assembly, found in a complex composed at least of ARHGEF2, NOD2 and RIPK2. Interacts with RIPK2; the interaction mediates tyrosine phosphorylation of RIPK2 by Src kinase CSK. Interacts with RIPK1 and RIPK3. Interacts with YWHAZ/14-3-3 zeta; when phosphorylated at Ser-860. Interacts with the kinases PAK4, AURKA and MAPK1. Interacts with RHOA and RAC1. Interacts with NOD1. Interacts (via the N- terminal zinc finger) with CAPN6 (via domain II). Interacts with DYNLT1. In terms of processing, phosphorylation of Ser-860 by PAK1 induces binding to protein YWHAZ, promoting its relocation to microtubules and the inhibition of its activity. Phosphorylated by AURKA and CDK1 during mitosis, which negatively regulates its activity. Phosphorylation by MAPK1 or MAPK3 increases nucleotide exchange activity. Phosphorylation by PAK4 releases GEF-H1 from the microtubules. Phosphorylated on serine, threonine and tyrosine residues in a RIPK2-dependent manner.

It is found in the cytoplasm. The protein localises to the cytoskeleton. The protein resides in the cell junction. Its subcellular location is the tight junction. It localises to the golgi apparatus. It is found in the spindle. The protein localises to the cytoplasmic vesicle. Activates Rho-GTPases by promoting the exchange of GDP for GTP. May be involved in epithelial barrier permeability, cell motility and polarization, dendritic spine morphology, antigen presentation, leukemic cell differentiation, cell cycle regulation, innate immune response, and cancer. Binds Rac-GTPases, but does not seem to promote nucleotide exchange activity toward Rac-GTPases. May stimulate instead the cortical activity of Rac. Inactive toward CDC42, TC10, or Ras-GTPases. Forms an intracellular sensing system along with NOD1 for the detection of microbial effectors during cell invasion by pathogens. Involved in innate immune signaling transduction pathway promoting cytokine IL6/interleukin-6 and TNF-alpha secretion in macrophage upon stimulation by bacterial peptidoglycans; acts as a signaling intermediate between NOD2 receptor and RIPK2 kinase. Contributes to the tyrosine phosphorylation of RIPK2 through Src tyrosine kinase leading to NF-kappaB activation by NOD2. Overexpression activates Rho-, but not Rac-GTPases, and increases paracellular permeability. Involved in neuronal progenitor cell division and differentiation. Involved in the migration of precerebellar neurons. The protein is Rho guanine nucleotide exchange factor 2 (ARHGEF2) of Sus scrofa (Pig).